Consider the following 397-residue polypeptide: 1-deoxy-D-xylulose 5-phosphate reductoisomerase (397 aa).

Residues Thr12, Gly13, Ser14, Ile15, Gly38, Lys39, Asn40, and Asn126 each contribute to the NADPH site. Lys127 contacts 1-deoxy-D-xylulose 5-phosphate. NADPH is bound at residue Glu128. Asp152 is a binding site for Mn(2+). 4 residues coordinate 1-deoxy-D-xylulose 5-phosphate: Ser153, Glu154, Ser188, and His211. Residue Glu154 participates in Mn(2+) binding. Gly217 provides a ligand contact to NADPH. Ser224, Asn229, Lys230, and Glu233 together coordinate 1-deoxy-D-xylulose 5-phosphate. A Mn(2+)-binding site is contributed by Glu233.

It belongs to the DXR family. The cofactor is Mg(2+). Mn(2+) is required as a cofactor.

It catalyses the reaction 2-C-methyl-D-erythritol 4-phosphate + NADP(+) = 1-deoxy-D-xylulose 5-phosphate + NADPH + H(+). It participates in isoprenoid biosynthesis; isopentenyl diphosphate biosynthesis via DXP pathway; isopentenyl diphosphate from 1-deoxy-D-xylulose 5-phosphate: step 1/6. Catalyzes the NADPH-dependent rearrangement and reduction of 1-deoxy-D-xylulose-5-phosphate (DXP) to 2-C-methyl-D-erythritol 4-phosphate (MEP). This Haemophilus influenzae (strain ATCC 51907 / DSM 11121 / KW20 / Rd) protein is 1-deoxy-D-xylulose 5-phosphate reductoisomerase.